We begin with the raw amino-acid sequence, 278 residues long: Tropomyosin A (278 aa).

Positions 1–270 (IMMAMKLEKE…YRAISGELDT (270 aa)) form a coiled coil. The interval 92–134 (DFEQSSGRLTETSTKLDDASKAAEESERNRKTLETRSISDDER) is disordered. Residues 95-104 (QSSGRLTETS) are compositionally biased toward polar residues. Positions 105–134 (TKLDDASKAAEESERNRKTLETRSISDDER) are enriched in basic and acidic residues.

Belongs to the tropomyosin family. Homodimer.

Functionally, tropomyosin, in association with the troponin complex, plays a central role in the calcium dependent regulation of muscle contraction. In Echinococcus granulosus (Hydatid tapeworm), this protein is Tropomyosin A.